The primary structure comprises 162 residues: RNA pyrophosphohydrolase (162 aa).

Residues 11–155 enclose the Nudix hydrolase domain; sequence PYRPCVGIVL…KRAVYEEVVA (145 aa). The Nudix box signature appears at 45–66; it reads GGIDEGEKPREAALRELWEETG.

The protein belongs to the Nudix hydrolase family. RppH subfamily. The cofactor is a divalent metal cation.

Functionally, accelerates the degradation of transcripts by removing pyrophosphate from the 5'-end of triphosphorylated RNA, leading to a more labile monophosphorylated state that can stimulate subsequent ribonuclease cleavage. The sequence is that of RNA pyrophosphohydrolase from Cereibacter sphaeroides (strain ATCC 17029 / ATH 2.4.9) (Rhodobacter sphaeroides).